Consider the following 81-residue polypeptide: Photosystem I iron-sulfur center (81 aa).

4Fe-4S ferredoxin-type domains lie at 2–31 and 39–68; these read AHSVKIYDTCIGCTQCVRACPTDVLEMIPW and IASAPRTEDCVGCKRCESACPTDFLSVRVY. Positions 11, 14, 17, 21, 48, 51, 54, and 58 each coordinate [4Fe-4S] cluster.

In terms of assembly, the eukaryotic PSI reaction center is composed of at least 11 subunits. The cofactor is [4Fe-4S] cluster.

The protein localises to the plastid. It localises to the chloroplast thylakoid membrane. The catalysed reaction is reduced [plastocyanin] + hnu + oxidized [2Fe-2S]-[ferredoxin] = oxidized [plastocyanin] + reduced [2Fe-2S]-[ferredoxin]. Its function is as follows. Apoprotein for the two 4Fe-4S centers FA and FB of photosystem I (PSI); essential for photochemical activity. FB is the terminal electron acceptor of PSI, donating electrons to ferredoxin. The C-terminus interacts with PsaA/B/D and helps assemble the protein into the PSI complex. Required for binding of PsaD and PsaE to PSI. PSI is a plastocyanin-ferredoxin oxidoreductase, converting photonic excitation into a charge separation, which transfers an electron from the donor P700 chlorophyll pair to the spectroscopically characterized acceptors A0, A1, FX, FA and FB in turn. The sequence is that of Photosystem I iron-sulfur center from Cycas taitungensis (Prince sago).